A 319-amino-acid chain; its full sequence is Ferrochelatase (319 aa).

His193 and Glu274 together coordinate Fe cation.

Belongs to the ferrochelatase family.

The protein resides in the cytoplasm. The enzyme catalyses heme b + 2 H(+) = protoporphyrin IX + Fe(2+). It participates in porphyrin-containing compound metabolism; protoheme biosynthesis; protoheme from protoporphyrin-IX: step 1/1. Its function is as follows. Catalyzes the ferrous insertion into protoporphyrin IX. In Actinobacillus pleuropneumoniae serotype 3 (strain JL03), this protein is Ferrochelatase.